The following is a 237-amino-acid chain: Ribonuclease PH (237 aa).

Phosphate-binding positions include arginine 86 and 124-126 (GTR).

It belongs to the RNase PH family. As to quaternary structure, homohexameric ring arranged as a trimer of dimers.

The catalysed reaction is tRNA(n+1) + phosphate = tRNA(n) + a ribonucleoside 5'-diphosphate. Phosphorolytic 3'-5' exoribonuclease that plays an important role in tRNA 3'-end maturation. Removes nucleotide residues following the 3'-CCA terminus of tRNAs; can also add nucleotides to the ends of RNA molecules by using nucleoside diphosphates as substrates, but this may not be physiologically important. Probably plays a role in initiation of 16S rRNA degradation (leading to ribosome degradation) during starvation. This is Ribonuclease PH from Nitrobacter winogradskyi (strain ATCC 25391 / DSM 10237 / CIP 104748 / NCIMB 11846 / Nb-255).